A 475-amino-acid polypeptide reads, in one-letter code: Homeobox even-skipped homolog protein 2 (475 aa).

Disordered stretches follow at residues 82–113 and 155–189; these read PSSE…AEAD and TSAS…SGAD. The span at 83 to 96 shows a compositional bias: low complexity; sequence SSESTVSSEIASAT. Over residues 160–186 the composition is skewed to gly residues; sequence SGLGSLHGGGGGGNSGAAALGGSGSGS. The segment at residues 191 to 250 is a DNA-binding region (homeobox); it reads VRRYRTAFTREQIARLEKEFYRENYVSRPRRCELAAALNLPETTIKVWFQNRRMKDKRQR.

The protein belongs to the even-skipped homeobox family.

Its subcellular location is the nucleus. The protein is Homeobox even-skipped homolog protein 2 (Evx2) of Mus musculus (Mouse).